The sequence spans 425 residues: Putative type I restriction enzyme MjaX specificity subunit (425 aa).

It belongs to the type-I restriction system S methylase family.

Its function is as follows. A putative specificity (S) subunit of a type I restriction enzyme thought to recognize 5'-TAGN(6)TGC-3'; the other subunits are unknown. This Methanocaldococcus jannaschii (strain ATCC 43067 / DSM 2661 / JAL-1 / JCM 10045 / NBRC 100440) (Methanococcus jannaschii) protein is Putative type I restriction enzyme MjaX specificity subunit.